Here is a 179-residue protein sequence, read N- to C-terminus: MKMFESLDSSATKSGRDLWAEICSCLPSPAQEDVSDNAFSDSFMDSHPAGESHTAAADSAVQPAGKPWAPLHDSEVYLASLEKKLRRIKGLNEEVTSKDMLRTLAQAKKECWDRFLQEKLASEFFVDGLDSDERTLEHFKRWLQPDKVAISTEEVQFLIPPESQAEKPEAGDKPAAAEQ.

Positions 36–65 (DNAFSDSFMDSHPAGESHTAAADSAVQPAG) are disordered. Residues 75–98 (EVYLASLEKKLRRIKGLNEEVTSK) are a coiled coil. The disordered stretch occupies residues 158–179 (LIPPESQAEKPEAGDKPAAAEQ).

As to quaternary structure, interacts with AP2S1; the interaction is direct and mediates association with adaptor protein complex 2 (AP-2).

The protein localises to the membrane. It localises to the coated pit. In terms of biological role, regulates clathrin-mediated endocytsois of cargos such as transferrin probably through the association and modulation of adaptor protein complex 2 (AP-2). Has a role in ciliogenesis. Required for proper cephalic and left/right axis development. The polypeptide is Coiled-coil domain-containing protein 32 (Ccdc32) (Mus musculus (Mouse)).